The sequence spans 759 residues: Forkhead box protein M1 (759 aa).

2 disordered regions span residues 1–54 (MRTS…AESS) and 94–165 (KGKE…QRQE). Residues 36–54 (PGQQEPTQAQASQDVAESS) are compositionally biased toward polar residues. Residues 141–151 (LGPKPGAKGVP) are compositionally biased toward low complexity. Glycyl lysine isopeptide (Lys-Gly) (interchain with G-Cter in SUMO2) cross-links involve residues lysine 200 and lysine 324. The segment at residues 234–326 (ERPPYSYMAM…LTLDQVFKPL (93 aa)) is a DNA-binding region (fork-head). Residues 328 to 349 (PGSPQSPEHLESQQKRPNPELR) are disordered. Serine 330 bears the Phosphoserine mark. The segment covering 335 to 349 (EHLESQQKRPNPELR) has biased composition (basic and acidic residues). Lysine 355 is covalently cross-linked (Glycyl lysine isopeptide (Lys-Gly) (interchain with G-Cter in SUMO2)). At serine 375 the chain carries Phosphoserine; by CHEK2. Residues lysine 421 and lysine 439 each participate in a glycyl lysine isopeptide (Lys-Gly) (interchain with G-Cter in SUMO2) cross-link. The residue at position 521 (serine 521) is a Phosphoserine. 3 disordered regions span residues 530–556 (LVTKRREKREVSRSRRKQHLQPPCLDE), 572–643 (MEIL…PQGA), and 681–706 (LASDPFSSSPPPHLEAKPGSPELQVP). The segment covering 531-542 (VTKRREKREVSR) has biased composition (basic and acidic residues). A compositionally biased stretch (polar residues) spans 604-613 (PVSSTPSKSV). Phosphothreonine; by CDK1 is present on threonine 608. Threonine 624 carries the post-translational modification Phosphothreonine. Serine 726 and serine 735 each carry phosphoserine; by PLK1.

In terms of processing, phosphorylated in M (mitotic) phase. Phosphorylation by the checkpoint kinase CHEK2 in response to DNA damage increases the FOXM1 protein stability probably stimulating the transcription of genes involved in DNA repair. Phosphorylated by CDK1 in late S and G2 phases, creating docking sites for the POLO box domains of PLK1. Subsequently, PLK1 binds and phosphorylates FOXM1, leading to activation of transcriptional activity and subsequent enhanced expression of key mitotic regulators. Phosphorylated by GSK3B leading to ubiquitination and proteasomal degradation. In terms of tissue distribution, highly expressed in thymus and testis, but weakly in intestine and lung. Appears to be expressed only in adult organs containing proliferating/cycling cells or in response to growth factors.

It is found in the nucleus. In terms of biological role, transcription factor regulating the expression of cell cycle genes essential for DNA replication and mitosis. Plays a role in the control of cell proliferation. Also plays a role in DNA break repair, participating in the DNA damage checkpoint response. Promotes transcription of PHB2. This Rattus norvegicus (Rat) protein is Forkhead box protein M1 (Foxm1).